The chain runs to 958 residues: Translation initiation factor IF-2 (958 aa).

Residues 50-67 (FKPAAAPKVEAKPAAPKV) are compositionally biased toward low complexity. Disordered regions lie at residues 50-224 (FKPA…RIDF) and 288-374 (EVVP…HELP). 3 stretches are compositionally biased toward basic and acidic residues: residues 68–89 (SAEKKAEKSEPAKPAVAKEEAK), 96–118 (SAEKKAEKSEPVKPAVAKEEAKP), and 138–153 (FKAEREARAKEQAERR). Positions 157 to 169 (KGNNRDQQQNGNR) are enriched in low complexity. Basic and acidic residues-rich tracts occupy residues 185 to 195 (RDNRRFNDQAK) and 290 to 323 (VPEKKEPAVDTRRKKQARPDKNRDDYDHEEDGPR). Residues 337–346 (NQKNSNWNNN) show a composition bias toward low complexity. The span at 365 to 374 (VTERKFHELP) shows a compositional bias: basic and acidic residues. The tr-type G domain maps to 460–627 (ERPPVVTIMG…TVLLVAEIQE (168 aa)). The interval 469–476 (GHVDHGKT) is G1. 469–476 (GHVDHGKT) contributes to the GTP binding site. The interval 494–498 (GITQH) is G2. The segment at 515 to 518 (DTPG) is G3. GTP is bound by residues 515–519 (DTPGH) and 569–572 (NKID). A G4 region spans residues 569–572 (NKID). Residues 605-607 (SAK) are G5.

Belongs to the TRAFAC class translation factor GTPase superfamily. Classic translation factor GTPase family. IF-2 subfamily.

The protein localises to the cytoplasm. Its function is as follows. One of the essential components for the initiation of protein synthesis. Protects formylmethionyl-tRNA from spontaneous hydrolysis and promotes its binding to the 30S ribosomal subunits. Also involved in the hydrolysis of GTP during the formation of the 70S ribosomal complex. The sequence is that of Translation initiation factor IF-2 from Streptococcus pneumoniae serotype 4 (strain ATCC BAA-334 / TIGR4).